Reading from the N-terminus, the 411-residue chain is Squalene synthase (411 aa).

2 helical membrane-spanning segments follow: residues 281 to 301 and 388 to 408; these read SIFRFCAIPQVMAIGTLAMCY and SPVLIVVIFIILAIILAQLSG.

This sequence belongs to the phytoene/squalene synthase family. Mg(2+) serves as cofactor.

The protein localises to the endoplasmic reticulum membrane. It carries out the reaction 2 (2E,6E)-farnesyl diphosphate + NADPH + H(+) = squalene + 2 diphosphate + NADP(+). The enzyme catalyses 2 (2E,6E)-farnesyl diphosphate + NADH + H(+) = squalene + 2 diphosphate + NAD(+). It functions in the pathway terpene metabolism; lanosterol biosynthesis; lanosterol from farnesyl diphosphate: step 1/3. The chain is Squalene synthase from Nicotiana benthamiana.